The sequence spans 259 residues: 5'-nucleotidase SurE (259 aa).

A divalent metal cation-binding residues include Asp8, Asp9, Ser39, and Asn93.

The protein belongs to the SurE nucleotidase family. Requires a divalent metal cation as cofactor.

The protein localises to the cytoplasm. The catalysed reaction is a ribonucleoside 5'-phosphate + H2O = a ribonucleoside + phosphate. In terms of biological role, nucleotidase that shows phosphatase activity on nucleoside 5'-monophosphates. The chain is 5'-nucleotidase SurE from Thermococcus kodakarensis (strain ATCC BAA-918 / JCM 12380 / KOD1) (Pyrococcus kodakaraensis (strain KOD1)).